A 20-amino-acid chain; its full sequence is Neurotoxin BmK 18(2) (20 aa).

Residues 2–20 enclose the LCN-type CS-alpha/beta domain; sequence RDAYIAEDYDCVYHCARDA.

This sequence belongs to the long (4 C-C) scorpion toxin superfamily. Sodium channel inhibitor family. Alpha subfamily. Expressed by the venom gland.

Its subcellular location is the secreted. Binds to sodium channels (Nav) and inhibits the inactivation of the activated channels, thereby blocking neuronal transmission. The sequence is that of Neurotoxin BmK 18(2) from Olivierus martensii (Manchurian scorpion).